Consider the following 339-residue polypeptide: Ketol-acid reductoisomerase (NADP(+)) (339 aa).

A KARI N-terminal Rossmann domain is found at 1 to 182 (MRVYYDRDAD…GGGRAGIIET (182 aa)). NADP(+) is bound by residues 24 to 27 (YGSQ), Arg-48, Ser-51, Ser-53, and 83 to 86 (DELQ). Residue His-108 is part of the active site. Gly-134 contacts NADP(+). One can recognise a KARI C-terminal knotted domain in the interval 183–328 (TFREECETDL…AKLRDMMPWI (146 aa)). 4 residues coordinate Mg(2+): Asp-191, Glu-195, Glu-227, and Glu-231. Ser-252 contacts substrate.

It belongs to the ketol-acid reductoisomerase family. Requires Mg(2+) as cofactor.

The enzyme catalyses (2R)-2,3-dihydroxy-3-methylbutanoate + NADP(+) = (2S)-2-acetolactate + NADPH + H(+). The catalysed reaction is (2R,3R)-2,3-dihydroxy-3-methylpentanoate + NADP(+) = (S)-2-ethyl-2-hydroxy-3-oxobutanoate + NADPH + H(+). The protein operates within amino-acid biosynthesis; L-isoleucine biosynthesis; L-isoleucine from 2-oxobutanoate: step 2/4. Its pathway is amino-acid biosynthesis; L-valine biosynthesis; L-valine from pyruvate: step 2/4. In terms of biological role, involved in the biosynthesis of branched-chain amino acids (BCAA). Catalyzes an alkyl-migration followed by a ketol-acid reduction of (S)-2-acetolactate (S2AL) to yield (R)-2,3-dihydroxy-isovalerate. In the isomerase reaction, S2AL is rearranged via a Mg-dependent methyl migration to produce 3-hydroxy-3-methyl-2-ketobutyrate (HMKB). In the reductase reaction, this 2-ketoacid undergoes a metal-dependent reduction by NADPH to yield (R)-2,3-dihydroxy-isovalerate. The protein is Ketol-acid reductoisomerase (NADP(+)) of Nitrobacter hamburgensis (strain DSM 10229 / NCIMB 13809 / X14).